A 665-amino-acid chain; its full sequence is Coiled-coil domain-containing protein 138 (665 aa).

Thr-48 is modified (phosphothreonine). Ser-49 carries the phosphoserine modification. Residues Gln-198 to Lys-323 adopt a coiled-coil conformation. Residue Ser-469 is modified to Phosphoserine.

In Homo sapiens (Human), this protein is Coiled-coil domain-containing protein 138 (CCDC138).